The primary structure comprises 245 residues: MASPSRRLQTKPVITCFKSVLLIYTFIFWITGVILLAVGIWGKVSLENYFSLLNEKATNVPFVLIGTGTVIILLGTFGCFATCRASAWMLKLYAMFLTLIFLVELVAAIIGFVFRHEIKNSLKNNYEKALKQYNATGDYRSDAVDKIQSMLHCCGVTNYRDWKDTNYYSEKGFPESCCKLEDCSPQRDADKVNNEGCFIMVMTIIESEMGVVAGISFGVACFQLIGIFLAYCLSRAITNNQYEIV.

The Cytoplasmic segment spans residues 1–19; the sequence is MASPSRRLQTKPVITCFKS. Residues 20 to 40 form a helical membrane-spanning segment; sequence VLLIYTFIFWITGVILLAVGI. Residues 41–59 are Extracellular-facing; that stretch reads WGKVSLENYFSLLNEKATN. Residues 60–80 form a helical membrane-spanning segment; sequence VPFVLIGTGTVIILLGTFGCF. Over 81–93 the chain is Cytoplasmic; it reads ATCRASAWMLKLY. A helical transmembrane segment spans residues 94 to 114; that stretch reads AMFLTLIFLVELVAAIIGFVF. The Extracellular portion of the chain corresponds to 115 to 208; sequence RHEIKNSLKN…IMVMTIIESE (94 aa). N134 carries N-linked (GlcNAc...) asparagine glycosylation. A helical transmembrane segment spans residues 209–229; it reads MGVVAGISFGVACFQLIGIFL. The Cytoplasmic portion of the chain corresponds to 230–245; sequence AYCLSRAITNNQYEIV.

Belongs to the tetraspanin (TM4SF) family.

It is found in the membrane. The protein is Tetraspanin-6 (TSPAN6) of Bos taurus (Bovine).